Consider the following 97-residue polypeptide: Putative mitochondrial import inner membrane translocase subunit Tim8 A-B (97 aa).

The short motif at 43–66 (CWEKCMDKPGPRLDGRAELCLVNC) is the Twin CX3C motif element. Cystine bridges form between Cys43–Cys66 and Cys47–Cys62.

This sequence belongs to the small Tim family. Heterohexamer; possibly composed of 3 copies of TIMM8AB and 3 copies of TIMM13.

It is found in the mitochondrion inner membrane. Putative mitochondrial intermembrane chaperone that participates in the import and insertion of some multi-pass transmembrane proteins into the mitochondrial inner membrane. Also required for the transfer of beta-barrel precursors from the TOM complex to the sorting and assembly machinery (SAM complex) of the outer membrane. Acts as a chaperone-like protein that protects the hydrophobic precursors from aggregation and guide them through the mitochondrial intermembrane space. The protein is Putative mitochondrial import inner membrane translocase subunit Tim8 A-B (Timm8a2) of Mus musculus (Mouse).